Consider the following 136-residue polypeptide: MAKEFSRSQRVSQEMQKEIALILQREIKDPRVGMATVSGIELSRDLAYAKVFVTFLNVLTDNADPDTVKNGIKALQDASGYIRTLLGKAMRLRIVPELTFAYDNSLIEGMRMSNLVSNVIKNDVERQVNPGSDEEK.

It belongs to the RbfA family. Monomer. Binds 30S ribosomal subunits, but not 50S ribosomal subunits or 70S ribosomes.

The protein resides in the cytoplasm. Functionally, one of several proteins that assist in the late maturation steps of the functional core of the 30S ribosomal subunit. Associates with free 30S ribosomal subunits (but not with 30S subunits that are part of 70S ribosomes or polysomes). Required for efficient processing of 16S rRNA. May interact with the 5'-terminal helix region of 16S rRNA. The polypeptide is Ribosome-binding factor A (Yersinia pestis bv. Antiqua (strain Antiqua)).